A 486-amino-acid polypeptide reads, in one-letter code: mRNA cap guanine-N(7) methyltransferase (486 aa).

The disordered stretch occupies residues 1-92 (MAGGADLDEP…ADRKAARERA (92 aa)). 3 stretches are compositionally biased toward basic and acidic residues: residues 9 to 28 (EPPRQSDSTTDRKRPADSTH), 35 to 54 (VPRDRAGNKTYDISKLEPAR), and 82 to 92 (EADRKAARERA). The region spanning 135–486 (SRIKGLRSFN…FYVGFCFYKV (352 aa)) is the mRNA cap 0 methyltransferase domain. 144-145 (NN) provides a ligand contact to mRNA. Residues lysine 148, glycine 177, aspartate 201, aspartate 247, 281–283 (MFC), and tyrosine 286 each bind S-adenosyl-L-methionine. The span at 333 to 351 (VEMKKKQAEAGDGSKKDDG) shows a compositional bias: basic and acidic residues. The disordered stretch occupies residues 333–365 (VEMKKKQAEAGDGSKKDDGGDAEEGELDEPEVE). Acidic residues predominate over residues 352 to 363 (GDAEEGELDEPE).

Belongs to the class I-like SAM-binding methyltransferase superfamily. mRNA cap 0 methyltransferase family.

The protein resides in the nucleus. The catalysed reaction is a 5'-end (5'-triphosphoguanosine)-ribonucleoside in mRNA + S-adenosyl-L-methionine = a 5'-end (N(7)-methyl 5'-triphosphoguanosine)-ribonucleoside in mRNA + S-adenosyl-L-homocysteine. Responsible for methylating the 5'-cap structure of mRNAs. The polypeptide is mRNA cap guanine-N(7) methyltransferase (ABD1) (Pyricularia oryzae (strain 70-15 / ATCC MYA-4617 / FGSC 8958) (Rice blast fungus)).